The sequence spans 603 residues: NADH-ubiquinone oxidoreductase chain 5 (603 aa).

A run of 16 helical transmembrane segments spans residues 4 to 24 (FTTMTALTLTSLIPPITATLI), 38 to 58 (TAIASAFTISLIPTTMFICLG), 89 to 109 (FLPVALLITWSIMEFSLWYMA), 122 to 142 (LIFLITMIILVTANNLLQLFI), 171 to 191 (AILYNRIGDIGFILALAWFLL), 211 to 233 (LPLLGLLLAAAGKSAQLGLHPWL), 241 to 261 (TPVSALLHSSTMVVAGVFLLI), 273 to 293 (IQTLTLCLGAITTLFAAICAL), 301 to 320 (IVAFSTSSQLGLMMVTIGIN), 325 to 347 (ALLHICTHAFFKALLFMCSGSII), 366 to 386 (MPLTSTSLTISSLALAGMPFL), 405 to 424 (NTWALSITLIATSLTGAYST), 457 to 477 (LMLGSLFAGFLITNNIPPMSL), 488 to 508 (LAALAATLLGLLVALDLNYLA), 524 to 544 (IMLGFYPSIIHRMIPHLSLLM), and 582 to 602 (GLIKLYFLSFLIPLLLILLMI).

Belongs to the complex I subunit 5 family. As to quaternary structure, core subunit of respiratory chain NADH dehydrogenase (Complex I) which is composed of 45 different subunits.

It is found in the mitochondrion inner membrane. The catalysed reaction is a ubiquinone + NADH + 5 H(+)(in) = a ubiquinol + NAD(+) + 4 H(+)(out). In terms of biological role, core subunit of the mitochondrial membrane respiratory chain NADH dehydrogenase (Complex I) which catalyzes electron transfer from NADH through the respiratory chain, using ubiquinone as an electron acceptor. Essential for the catalytic activity and assembly of complex I. In Pongo abelii (Sumatran orangutan), this protein is NADH-ubiquinone oxidoreductase chain 5 (MT-ND5).